Here is a 251-residue protein sequence, read N- to C-terminus: MSDRRFALIPCAGTGSRAGGSVPKQYQPVAGRPMIWYALAAFSACDAISATALVLAPDDMPLESRFGADIFAGLRFDTAFVGGDTRHASVLAGLHHLAQLGATDTDWVLVHDAARPGLTPAMIHNLVRAVESDNDDDPDAAIGGILAVPVPDTLKRADAGERIGTTVPRDGLWQAQTPQMFRVGVLRQALQDALAAGAVVTDEASAIERLGLHPRLVNGSLRNFKVTYPEDFALAEVLLGTGPARSADSGA.

Belongs to the IspD/TarI cytidylyltransferase family. IspD subfamily.

The enzyme catalyses 2-C-methyl-D-erythritol 4-phosphate + CTP + H(+) = 4-CDP-2-C-methyl-D-erythritol + diphosphate. It participates in isoprenoid biosynthesis; isopentenyl diphosphate biosynthesis via DXP pathway; isopentenyl diphosphate from 1-deoxy-D-xylulose 5-phosphate: step 2/6. Functionally, catalyzes the formation of 4-diphosphocytidyl-2-C-methyl-D-erythritol from CTP and 2-C-methyl-D-erythritol 4-phosphate (MEP). This Cupriavidus pinatubonensis (strain JMP 134 / LMG 1197) (Cupriavidus necator (strain JMP 134)) protein is 2-C-methyl-D-erythritol 4-phosphate cytidylyltransferase.